The sequence spans 159 residues: Ribosomal RNA large subunit methyltransferase H (159 aa).

Residues Leu-76, Gly-108, and 127 to 132 (FGLLTL) contribute to the S-adenosyl-L-methionine site.

The protein belongs to the RNA methyltransferase RlmH family. Homodimer.

Its subcellular location is the cytoplasm. It carries out the reaction pseudouridine(1915) in 23S rRNA + S-adenosyl-L-methionine = N(3)-methylpseudouridine(1915) in 23S rRNA + S-adenosyl-L-homocysteine + H(+). Specifically methylates the pseudouridine at position 1915 (m3Psi1915) in 23S rRNA. In Leuconostoc citreum (strain KM20), this protein is Ribosomal RNA large subunit methyltransferase H.